Reading from the N-terminus, the 59-residue chain is U-limacoditoxin(3)-Dv33 (59 aa).

The N-terminal stretch at 1–19 (MSKVILLCLIFALFACSIS) is a signal peptide.

It belongs to the limacoditoxin-3 family. In terms of processing, the natural peptide is not amidated. The recombinant peptide is amidated. As to expression, expressed by the venom secretory cell of the spine. The spine is a cuticular structure containing a single large nucleated venom-secreting cell at its base. It is an independent unit capable of producing, storing and injecting venom. On the back of D.vulnerans caterpillars, spines are grouped together by 50 to 100 to form scoli, of which there are eight in D.vulnerans.

It localises to the secreted. Probable toxin. Shows a relatively potent antiparasitic activity against the major pathogenic nematode of ruminants (H.contortus, EC(50)=2.6 uM). Does not show insecticidal and antimicrobial activities. Does not induce increase in intracellular calcium in mouse DRG neurons, suggesting that it does not induce pain. The polypeptide is U-limacoditoxin(3)-Dv33 (Doratifera vulnerans (Mottled cup moth)).